We begin with the raw amino-acid sequence, 1375 residues long: DNA-directed RNA polymerase subunit beta (1375 aa).

Belongs to the RNA polymerase beta chain family. In terms of assembly, the RNAP catalytic core consists of 2 alpha, 1 beta, 1 beta' and 1 omega subunit. When a sigma factor is associated with the core the holoenzyme is formed, which can initiate transcription.

It carries out the reaction RNA(n) + a ribonucleoside 5'-triphosphate = RNA(n+1) + diphosphate. Its function is as follows. DNA-dependent RNA polymerase catalyzes the transcription of DNA into RNA using the four ribonucleoside triphosphates as substrates. This chain is DNA-directed RNA polymerase subunit beta, found in Oleidesulfovibrio alaskensis (strain ATCC BAA-1058 / DSM 17464 / G20) (Desulfovibrio alaskensis).